The following is a 263-amino-acid chain: Pyrroline-5-carboxylate reductase (263 aa).

This sequence belongs to the pyrroline-5-carboxylate reductase family.

It is found in the cytoplasm. It carries out the reaction L-proline + NADP(+) = (S)-1-pyrroline-5-carboxylate + NADPH + 2 H(+). It catalyses the reaction L-proline + NAD(+) = (S)-1-pyrroline-5-carboxylate + NADH + 2 H(+). Its pathway is amino-acid biosynthesis; L-proline biosynthesis; L-proline from L-glutamate 5-semialdehyde: step 1/1. In terms of biological role, catalyzes the reduction of 1-pyrroline-5-carboxylate (PCA) to L-proline. This chain is Pyrroline-5-carboxylate reductase, found in Treponema pallidum (strain Nichols).